Reading from the N-terminus, the 296-residue chain is Maltose/maltodextrin transport system permease protein MalG (296 aa).

The Cytoplasmic portion of the chain corresponds to 1–12; sequence MAMVQGKSLKYR. The chain crosses the membrane as a helical span at residues 13 to 35; sequence VWATHIALWAFLSMIIFPLLMIV. The Periplasmic portion of the chain corresponds to 36-88; sequence AISFREGNFATGSLIPDNPSLEHWKLALGFSVTNADGSVTPPPFPVLTWLWNS. The ABC transmembrane type-1 domain maps to 85–281; that stretch reads LWNSVKVAGI…LPITIVFLLA (197 aa). The chain crosses the membrane as a helical span at residues 89–111; sequence VKVAGITSILIVALSTTSAYAFA. At 112–123 the chain is on the cytoplasmic side; the sequence is RLRFKGKETILK. The chain crosses the membrane as a helical span at residues 124 to 143; the sequence is AMMIFQMFPAVLALVALYAL. Residues 144-152 lie on the Periplasmic side of the membrane; that stretch reads FDKLGQYIP. Residues 153–175 form a helical membrane-spanning segment; the sequence is FLGLNTHGGLIFSYLGGIALHVW. Residues 176-204 lie on the Cytoplasmic side of the membrane; it reads TIKGYFETIDNSLEEAAALDGATPWQAFR. Residues 205–227 form a helical membrane-spanning segment; that stretch reads LVLLPLSVPILAVVFILSFIGVV. At 228 to 257 the chain is on the periplasmic side; it reads GEVPVASLLLSDVNSYTLAVGMQQYLYPQN. The helical transmembrane segment at 258–280 threads the bilayer; the sequence is YLWGDFAAAAVLSALPITIVFLL. At 281–296 the chain is on the cytoplasmic side; that stretch reads AQRWLVGGLTAGGVKG.

It belongs to the binding-protein-dependent transport system permease family. MalFG subfamily. In terms of assembly, the complex is composed of two ATP-binding proteins (MalK), two transmembrane proteins (MalG and MalF) and a solute-binding protein (MalE).

It localises to the cell inner membrane. In terms of biological role, part of the ABC transporter complex MalEFGK involved in maltose/maltodextrin import. Probably responsible for the translocation of the substrate across the membrane. The sequence is that of Maltose/maltodextrin transport system permease protein MalG (malG) from Vibrio vulnificus (strain CMCP6).